Here is a 269-residue protein sequence, read N- to C-terminus: Putative phosphoenolpyruvate synthase regulatory protein (269 aa).

An ADP-binding site is contributed by 149-156 (GVSRSGKT).

Belongs to the pyruvate, phosphate/water dikinase regulatory protein family. PSRP subfamily.

It carries out the reaction [pyruvate, water dikinase] + ADP = [pyruvate, water dikinase]-phosphate + AMP + H(+). The catalysed reaction is [pyruvate, water dikinase]-phosphate + phosphate + H(+) = [pyruvate, water dikinase] + diphosphate. Functionally, bifunctional serine/threonine kinase and phosphorylase involved in the regulation of the phosphoenolpyruvate synthase (PEPS) by catalyzing its phosphorylation/dephosphorylation. This chain is Putative phosphoenolpyruvate synthase regulatory protein, found in Colwellia psychrerythraea (strain 34H / ATCC BAA-681) (Vibrio psychroerythus).